Reading from the N-terminus, the 437-residue chain is Adenylosuccinate synthetase (437 aa).

Residues 12 to 18 (GDEGKGK) and 40 to 42 (GHT) contribute to the GTP site. Residue aspartate 13 is the Proton acceptor of the active site. Aspartate 13 and glycine 40 together coordinate Mg(2+). IMP is bound by residues 13 to 16 (DEGK), 38 to 41 (NAGH), threonine 128, arginine 142, glutamine 223, threonine 238, and arginine 302. Histidine 41 serves as the catalytic Proton donor. A disordered region spans residues 119 to 138 (QRGERRIGTTGRGIGPTYAD). Substrate is bound at residue 298-304 (TTTGRRR). GTP contacts are provided by residues arginine 304, 330-332 (KLD), and 412-414 (SLG).

This sequence belongs to the adenylosuccinate synthetase family. Homodimer. Mg(2+) is required as a cofactor.

It is found in the cytoplasm. The catalysed reaction is IMP + L-aspartate + GTP = N(6)-(1,2-dicarboxyethyl)-AMP + GDP + phosphate + 2 H(+). The protein operates within purine metabolism; AMP biosynthesis via de novo pathway; AMP from IMP: step 1/2. Functionally, plays an important role in the de novo pathway of purine nucleotide biosynthesis. Catalyzes the first committed step in the biosynthesis of AMP from IMP. The polypeptide is Adenylosuccinate synthetase (Synechococcus sp. (strain WH7803)).